The primary structure comprises 347 residues: Protein RecA (347 aa).

64–71 (GPESSGKT) serves as a coordination point for ATP.

This sequence belongs to the RecA family.

It is found in the cytoplasm. Can catalyze the hydrolysis of ATP in the presence of single-stranded DNA, the ATP-dependent uptake of single-stranded DNA by duplex DNA, and the ATP-dependent hybridization of homologous single-stranded DNAs. It interacts with LexA causing its activation and leading to its autocatalytic cleavage. The sequence is that of Protein RecA from Bartonella henselae (strain ATCC 49882 / DSM 28221 / CCUG 30454 / Houston 1) (Rochalimaea henselae).